The sequence spans 317 residues: MGEVQREKVAVIIGPTAVGKTKLSIDLAKALNGEIISGDSMQIYRTMDIGTAKVTKEEMDGIPHYMVDIKNPEESFSVAEFQERVRKHIREITERGKLPIIVGGTGLYIQSVLFDYQFTDDAGDAIYREQMEKLALERGVEYVHKKLQEVDPESAERIHANNVRRVIRALEIFHTTGEKMSDQLEKQENELLYDVSLIGLTMDREMLYDRINLRVDIMMDQGLLEEVEGLYNRGIRDCQSIQAIGYKEIYDYFEDRVSLEEAVSQLKTNSRRYAKRQLTWFRNKMDVTWFDVTDGEKTSEILRYIEGKLQLKSNNSK.

An ATP-binding site is contributed by 14 to 21 (GPTAVGKT). 16 to 21 (TAVGKT) provides a ligand contact to substrate. An interaction with substrate tRNA region spans residues 39 to 42 (DSMQ).

It belongs to the IPP transferase family. As to quaternary structure, monomer. Mg(2+) is required as a cofactor.

It carries out the reaction adenosine(37) in tRNA + dimethylallyl diphosphate = N(6)-dimethylallyladenosine(37) in tRNA + diphosphate. Catalyzes the transfer of a dimethylallyl group onto the adenine at position 37 in tRNAs that read codons beginning with uridine, leading to the formation of N6-(dimethylallyl)adenosine (i(6)A). The sequence is that of tRNA dimethylallyltransferase from Bacillus cereus (strain Q1).